Here is a 285-residue protein sequence, read N- to C-terminus: Chlorite dismutase (285 aa).

The first 38 residues, 1 to 38, serve as a signal peptide directing secretion; that stretch reads MKVRCVSLVAAGLLTIAGSAIGQPAPAPMPAMAPAAKP. E105 is a Ca(2+) binding site. Residue H205 participates in heme binding. Residue R218 is the Proton acceptor of the active site. Positions 227 and 266 each coordinate Ca(2+).

It belongs to the chlorite dismutase family. Homopentamer. Heme b is required as a cofactor.

It is found in the periplasm. The catalysed reaction is chloride + O2 = chlorite. In terms of biological role, catalyzes the heme-dependent decomposition of chlorite to O(2) and chloride with high efficiency and specificity. Used to detoxify chlorite, a by-product of the reduction of perchlorate, a primarily anthropogenic pollutant, in perchlorate-respiring bacteria. The protein is Chlorite dismutase (cld) of Ideonella dechloratans.